Reading from the N-terminus, the 179-residue chain is MEYTTKTQIYQKVKKPMLERQRRARMNKCLDNLKTLVAELRGDDGILRMDKAEMLESAVIFMRQQKTPKKVAQEEQSLPLDSFKNGYMNAVNEVSRVMASTPGMSVDLGKSVMTHLGRVYKNLQQFHEAQSAADFIQNSMDCSSMDKAPLSPASSGYHSDCDSPAPSPQPMQQPLWRPW.

Residues 10–65 enclose the bHLH domain; sequence YQKVKKPMLERQRRARMNKCLDNLKTLVAELRGDDGILRMDKAEMLESAVIFMRQQ. The Orange domain maps to 83 to 116; that stretch reads FKNGYMNAVNEVSRVMASTPGMSVDLGKSVMTHL. The segment at 146–179 is disordered; it reads DKAPLSPASSGYHSDCDSPAPSPQPMQQPLWRPW. The short motif at 176–179 is the WRPW motif element; the sequence is WRPW.

Homodimer. Heterodimers with dpn. Transcription repression requires formation of a complex with a corepressor protein (Groucho).

The protein localises to the nucleus. In terms of biological role, participates in the control of cell fate choice by uncommitted neuroectodermal cells in the embryo. Transcriptional repressor. Binds DNA on N-box motifs: 5'-CACNAG-3'. Part of the Notch signaling pathway. This Drosophila melanogaster (Fruit fly) protein is Enhancer of split m8 protein.